A 232-amino-acid chain; its full sequence is Flagellar L-ring protein (232 aa).

Positions 1–21 (MQKNAAHTYAISSLLVLSLTG) are cleaved as a signal peptide. Cys22 is lipidated: N-palmitoyl cysteine. A lipid anchor (S-diacylglycerol cysteine) is attached at Cys22.

This sequence belongs to the FlgH family. The basal body constitutes a major portion of the flagellar organelle and consists of four rings (L,P,S, and M) mounted on a central rod.

Its subcellular location is the cell outer membrane. It is found in the bacterial flagellum basal body. Its function is as follows. Assembles around the rod to form the L-ring and probably protects the motor/basal body from shearing forces during rotation. The chain is Flagellar L-ring protein from Escherichia coli O7:K1 (strain IAI39 / ExPEC).